Consider the following 281-residue polypeptide: Large ribosomal subunit protein uL2 (281 aa).

A disordered region spans residues 220–281 (VRGSVMNPND…RRRDGKALSK (62 aa)). Residues 258–271 (KTRKKNKQSNKMIM) show a composition bias toward basic residues. Positions 272-281 (RRRDGKALSK) are enriched in basic and acidic residues.

The protein belongs to the universal ribosomal protein uL2 family. As to quaternary structure, part of the 50S ribosomal subunit. Forms a bridge to the 30S subunit in the 70S ribosome.

Functionally, one of the primary rRNA binding proteins. Required for association of the 30S and 50S subunits to form the 70S ribosome, for tRNA binding and peptide bond formation. It has been suggested to have peptidyltransferase activity; this is somewhat controversial. Makes several contacts with the 16S rRNA in the 70S ribosome. This chain is Large ribosomal subunit protein uL2, found in Lachnoclostridium phytofermentans (strain ATCC 700394 / DSM 18823 / ISDg) (Clostridium phytofermentans).